A 1404-amino-acid polypeptide reads, in one-letter code: DNA-directed RNA polymerase subunit beta' (1404 aa).

Residues Cys-70, Cys-72, Cys-85, and Cys-88 each coordinate Zn(2+). Asp-460, Asp-462, and Asp-464 together coordinate Mg(2+). Positions 814, 888, 895, and 898 each coordinate Zn(2+).

It belongs to the RNA polymerase beta' chain family. The RNAP catalytic core consists of 2 alpha, 1 beta, 1 beta' and 1 omega subunit. When a sigma factor is associated with the core the holoenzyme is formed, which can initiate transcription. Requires Mg(2+) as cofactor. The cofactor is Zn(2+).

The catalysed reaction is RNA(n) + a ribonucleoside 5'-triphosphate = RNA(n+1) + diphosphate. Its function is as follows. DNA-dependent RNA polymerase catalyzes the transcription of DNA into RNA using the four ribonucleoside triphosphates as substrates. In Shewanella amazonensis (strain ATCC BAA-1098 / SB2B), this protein is DNA-directed RNA polymerase subunit beta'.